Consider the following 761-residue polypeptide: Phosphoribosylformylglycinamidine synthase subunit PurL (761 aa).

The span at 1–16 (MTGNPAAPAATSVSPP) shows a compositional bias: low complexity. The segment at 1–21 (MTGNPAAPAATSVSPPAEQPY) is disordered. His57 is an active-site residue. Residues Tyr60 and Lys101 each coordinate ATP. Residue Glu103 coordinates Mg(2+). Substrate contacts are provided by residues 104-107 (SHNH) and Arg126. Catalysis depends on His105, which acts as the Proton acceptor. Mg(2+) is bound at residue Asp127. Gln252 contributes to the substrate binding site. Asp280 is a Mg(2+) binding site. A substrate-binding site is contributed by 329 to 331 (ESQ). ATP is bound by residues Asn519 and Gly556. Mg(2+) is bound at residue Asn557. Ser559 lines the substrate pocket.

It belongs to the FGAMS family. Monomer. Part of the FGAM synthase complex composed of 1 PurL, 1 PurQ and 2 PurS subunits.

The protein localises to the cytoplasm. It catalyses the reaction N(2)-formyl-N(1)-(5-phospho-beta-D-ribosyl)glycinamide + L-glutamine + ATP + H2O = 2-formamido-N(1)-(5-O-phospho-beta-D-ribosyl)acetamidine + L-glutamate + ADP + phosphate + H(+). Its pathway is purine metabolism; IMP biosynthesis via de novo pathway; 5-amino-1-(5-phospho-D-ribosyl)imidazole from N(2)-formyl-N(1)-(5-phospho-D-ribosyl)glycinamide: step 1/2. In terms of biological role, part of the phosphoribosylformylglycinamidine synthase complex involved in the purines biosynthetic pathway. Catalyzes the ATP-dependent conversion of formylglycinamide ribonucleotide (FGAR) and glutamine to yield formylglycinamidine ribonucleotide (FGAM) and glutamate. The FGAM synthase complex is composed of three subunits. PurQ produces an ammonia molecule by converting glutamine to glutamate. PurL transfers the ammonia molecule to FGAR to form FGAM in an ATP-dependent manner. PurS interacts with PurQ and PurL and is thought to assist in the transfer of the ammonia molecule from PurQ to PurL. The chain is Phosphoribosylformylglycinamidine synthase subunit PurL from Frankia casuarinae (strain DSM 45818 / CECT 9043 / HFP020203 / CcI3).